The following is a 203-amino-acid chain: Enterotoxin-like toxin X (203 aa).

Positions 164 to 180 (YTLESHKELQKNRENVE) are sialic acid-binding motif.

This sequence belongs to the staphylococcal/streptococcal toxin family.

Its subcellular location is the secreted. Plays a role in the inhibition of the host innate immune system. Inhibits phagocytosis and killing by human neutrophils by interacting with multiple neutrophil surface glycoproteins in a sialic acid-dependent manner. The chain is Enterotoxin-like toxin X from Staphylococcus aureus.